Consider the following 295-residue polypeptide: Phosphoribosylaminoimidazole-succinocarboxamide synthase (295 aa).

It belongs to the SAICAR synthetase family.

The enzyme catalyses 5-amino-1-(5-phospho-D-ribosyl)imidazole-4-carboxylate + L-aspartate + ATP = (2S)-2-[5-amino-1-(5-phospho-beta-D-ribosyl)imidazole-4-carboxamido]succinate + ADP + phosphate + 2 H(+). Its pathway is purine metabolism; IMP biosynthesis via de novo pathway; 5-amino-1-(5-phospho-D-ribosyl)imidazole-4-carboxamide from 5-amino-1-(5-phospho-D-ribosyl)imidazole-4-carboxylate: step 1/2. The polypeptide is Phosphoribosylaminoimidazole-succinocarboxamide synthase (Corynebacterium ammoniagenes (Brevibacterium ammoniagenes)).